Reading from the N-terminus, the 289-residue chain is Phosphoribulokinase (289 aa).

12 to 20 (GSSGAGTTT) contributes to the ATP binding site.

It belongs to the phosphoribulokinase family.

The enzyme catalyses D-ribulose 5-phosphate + ATP = D-ribulose 1,5-bisphosphate + ADP + H(+). It functions in the pathway carbohydrate biosynthesis; Calvin cycle. This Rhizobium meliloti (strain 1021) (Ensifer meliloti) protein is Phosphoribulokinase (cbbP).